A 314-amino-acid chain; its full sequence is Beta-ketoacyl-[acyl-carrier-protein] synthase III (314 aa).

Residues Cys-112 and His-241 contribute to the active site. The ACP-binding stretch occupies residues 242–246 (QANIR). Asn-271 is a catalytic residue.

Belongs to the thiolase-like superfamily. FabH family. In terms of assembly, homodimer.

The protein resides in the cytoplasm. The catalysed reaction is malonyl-[ACP] + acetyl-CoA + H(+) = 3-oxobutanoyl-[ACP] + CO2 + CoA. The protein operates within lipid metabolism; fatty acid biosynthesis. In terms of biological role, catalyzes the condensation reaction of fatty acid synthesis by the addition to an acyl acceptor of two carbons from malonyl-ACP. Catalyzes the first condensation reaction which initiates fatty acid synthesis and may therefore play a role in governing the total rate of fatty acid production. Possesses both acetoacetyl-ACP synthase and acetyl transacylase activities. Its substrate specificity determines the biosynthesis of branched-chain and/or straight-chain of fatty acids. This chain is Beta-ketoacyl-[acyl-carrier-protein] synthase III, found in Vesicomyosocius okutanii subsp. Calyptogena okutanii (strain HA).